Reading from the N-terminus, the 374-residue chain is PqqA peptide cyclase (374 aa).

Residues 4–224 (IEPPMGLLAE…ERLKGVMVID (221 aa)) form the Radical SAM core domain. Residues cysteine 18, cysteine 22, and cysteine 25 each contribute to the [4Fe-4S] cluster site.

The protein belongs to the radical SAM superfamily. PqqE family. In terms of assembly, interacts with PqqD. The interaction is necessary for activity of PqqE. It depends on [4Fe-4S] cluster as a cofactor.

It carries out the reaction [PQQ precursor protein] + S-adenosyl-L-methionine = E-Y cross-linked-[PQQ precursor protein] + 5'-deoxyadenosine + L-methionine + H(+). The protein operates within cofactor biosynthesis; pyrroloquinoline quinone biosynthesis. Its function is as follows. Catalyzes the cross-linking of a glutamate residue and a tyrosine residue in the PqqA protein as part of the biosynthesis of pyrroloquinoline quinone (PQQ). This is PqqA peptide cyclase from Granulibacter bethesdensis (strain ATCC BAA-1260 / CGDNIH1).